Reading from the N-terminus, the 636-residue chain is MTGLEGAQNLTVADKQLTPDEGVLTESPKMTNIHEIVEDTAASSENGDSEAKEIAAKIRAGTLENVEFTEYANYLGTPGNDQILREFLLLLDPLPSSITGTLRKLSSSLYFIAEAANLDTILEALSRQWLSEHNKAHYQDNYKLCHIVMFALLMLNSTLHNSEADLSFTIEEFRENTINALQKESPDIDVPSFNRELSLCYYQLDNEQLPLLRPPSQPRYSLSGRRTNGNGGHSNMKKASMLSLERFQTNQSLISTQNSMATLTSRDTTANSNYRMRNNKPLQKLYLDEPFDAELQDLNGTPWLMDSMVNVQEASKANNSTSQLLSSPVTRKRKLMSWFRKHTKDTIFNENIHAADTDNWQHARIRIYQGRLFVYKFKGFGRERSIPRDIHKWSLEMCKRSCSQFHVYNLYGTIASLVQENIVASENSNVSSASFLIDFPHGLDSTSGLSFRFKTRNQDEAKQFTACCNFWSARISPIPSAQVEMISNEEYGWSPRLLEGESGAEQVNLAQVKLAHWKPLVGLDAIFSELDEGIALWDFDSQLGNLRVFTELLGAQLDEHNAVKPKMVELWAKKGREYQPQFEAAMENWNNKYLYLNKQYQKHLVYLKALENAVQFYERSKSVKNPETKNAAKEQS.

2 disordered regions span residues 1–29 (MTGLEGAQNLTVADKQLTPDEGVLTESPK) and 213–234 (RPPSQPRYSLSGRRTNGNGGHS). An SEC7 domain is found at 1-203 (MTGLEGAQNL…NRELSLCYYQ (203 aa)). The region spanning 333–475 (RKLMSWFRKH…ACCNFWSARI (143 aa)) is the PH domain.

It belongs to the YEL1 family.

It localises to the cytoplasm. Its subcellular location is the cell membrane. It is found in the bud neck. The protein resides in the bud tip. Functionally, guanine nucleotide exchange factor for ARF3 required for localization of ARF3 to the bud neck and tip and involved in actin patch polarization. This Lachancea thermotolerans (strain ATCC 56472 / CBS 6340 / NRRL Y-8284) (Yeast) protein is Guanine-nucleotide exchange factor YEL1 (YEL1).